The primary structure comprises 261 residues: Phosphoribosylaminoimidazole-succinocarboxamide synthase (261 aa).

It belongs to the SAICAR synthetase family.

The catalysed reaction is 5-amino-1-(5-phospho-D-ribosyl)imidazole-4-carboxylate + L-aspartate + ATP = (2S)-2-[5-amino-1-(5-phospho-beta-D-ribosyl)imidazole-4-carboxamido]succinate + ADP + phosphate + 2 H(+). It functions in the pathway purine metabolism; IMP biosynthesis via de novo pathway; 5-amino-1-(5-phospho-D-ribosyl)imidazole-4-carboxamide from 5-amino-1-(5-phospho-D-ribosyl)imidazole-4-carboxylate: step 1/2. The polypeptide is Phosphoribosylaminoimidazole-succinocarboxamide synthase (Novosphingobium aromaticivorans (strain ATCC 700278 / DSM 12444 / CCUG 56034 / CIP 105152 / NBRC 16084 / F199)).